We begin with the raw amino-acid sequence, 290 residues long: Ribosomal protein L11 methyltransferase (290 aa).

Residues Thr135, Gly158, Asp180, and Asn227 each coordinate S-adenosyl-L-methionine.

This sequence belongs to the methyltransferase superfamily. PrmA family.

Its subcellular location is the cytoplasm. The enzyme catalyses L-lysyl-[protein] + 3 S-adenosyl-L-methionine = N(6),N(6),N(6)-trimethyl-L-lysyl-[protein] + 3 S-adenosyl-L-homocysteine + 3 H(+). Methylates ribosomal protein L11. The polypeptide is Ribosomal protein L11 methyltransferase (Chelativorans sp. (strain BNC1)).